We begin with the raw amino-acid sequence, 103 residues long: Defensin-like protein 268 (103 aa).

Residues 1-24 form the signal peptide; that stretch reads MARLIFHFVFALILAAYLLSVTDA. Intrachain disulfides connect C44–C103, C68–C87, C74–C98, and C78–C100.

It belongs to the DEFL family.

It is found in the secreted. The polypeptide is Defensin-like protein 268 (Arabidopsis thaliana (Mouse-ear cress)).